Consider the following 162-residue polypeptide: Scytalone dehydratase-like protein claB (162 aa).

Y48 is a substrate binding site. Residues H83 and H108 contribute to the active site.

Belongs to the scytalone dehydratase family.

Its pathway is pigment biosynthesis. Functionally, scytalone dehydratase-like protein; part of the gene cluster that mediates the biosynthesis of the bianthraquinone cladofulvin, a conidial pigment not required for virulence but that plays a role in fitness and resistance to environmental stresses including UV light and low-temperature stress. The pathway begins with the synthesis of atrochrysone thioester by the polyketide synthase (PKS) claG. The atrochrysone carboxyl ACP thioesterase claF then breaks the thioester bond and releases the atrochrysone carboxylic acid from claG. This compound is decarboxylated by claH to yield emodin, which is further converted to chrysophanol hydroquinone by the reductase claC and the dehydratase claB. The cytochrome P450 monooxygenase claM then catalyzes the dimerization of nataloe-emodin to cladofulvin. This Passalora fulva (Tomato leaf mold) protein is Scytalone dehydratase-like protein claB.